A 225-amino-acid polypeptide reads, in one-letter code: Protein ZW2 (225 aa).

Positions 7 to 225 (SETFASFFND…FYLRLRDLGV (219 aa)) constitute a DOG1 domain.

Its function is as follows. May be involved in the regulation of abscisic acid (ABA) sensitivity. The polypeptide is Protein ZW2 (Arabidopsis thaliana (Mouse-ear cress)).